A 306-amino-acid chain; its full sequence is uncharacterized protein (306 aa).

Over 1 to 6 (MRFRQL) the chain is Cytoplasmic. The helical transmembrane segment at 7-27 (LPLFGALFALYIIWGSTYFVI) threads the bilayer. The region spanning 18–141 (IIWGSTYFVI…GLAGIIMLNS (124 aa)) is the EamA 1 domain. At 28–36 (RIGVESWPP) the chain is on the periplasmic side. Residues 37-57 (LMMAGVRFLAAGILLLAFLLL) form a helical membrane-spanning segment. The Cytoplasmic segment spans residues 58–67 (RGHKLPPLRP). Residues 68–88 (LLNAALIGLLLLAVGNGMVTV) form a helical membrane-spanning segment. Residues 89–93 (AEHQN) lie on the Periplasmic side of the membrane. A helical membrane pass occupies residues 94 to 114 (VPSGIAAVVVATVPLFTLCFS). At 115–125 (RLFGIKTRKLE) the chain is on the cytoplasmic side. Residues 126–146 (WVGIAIGLAGIIMLNSGGNLS) form a helical membrane-spanning segment. Topologically, residues 147–148 (GN) are periplasmic. A helical membrane pass occupies residues 149–169 (PWGAILILIGSISWAFGSVYG). In terms of domain architecture, EamA 2 spans 160-285 (ISWAFGSVYG…IVFAVVLVTL (126 aa)). Topologically, residues 170–173 (SRIT) are cytoplasmic. Residues 174–194 (LPVGMMAGAIEMLAAGVVLMI) traverse the membrane as a helical segment. The Periplasmic portion of the chain corresponds to 195 to 206 (ASMIAGEKLTAL). A helical membrane pass occupies residues 207–227 (PSLSGFLAVGYLALFGSIIAI). Topologically, residues 228–239 (NAYMYLIRNVSP) are cytoplasmic. The helical transmembrane segment at 240–260 (ALATSYAYVNPVVAVLLGTGL) threads the bilayer. Topologically, residues 261–269 (GGETLSKIE) are periplasmic. A helical membrane pass occupies residues 270–290 (WLALGVIVFAVVLVTLGKYLF). Topologically, residues 291–306 (PAKPVVAPVIQDASSE) are cytoplasmic.

Belongs to the EamA transporter family.

It localises to the cell inner membrane. This is an uncharacterized protein from Escherichia coli O157:H7.